The primary structure comprises 98 residues: uncharacterized protein (98 aa).

Positions 58–98 (ARFPVEDTAGGLLRTGGHRPQISDEEVSKRHHEQSHGQEDH) are disordered.

This is an uncharacterized protein from Saccharomyces cerevisiae (strain ATCC 204508 / S288c) (Baker's yeast).